The following is a 236-amino-acid chain: Cutinase (236 aa).

The signal sequence occupies residues 1–20 (MSLTLFSFLSLVSILCIVTA). A disulfide bridge connects residues cysteine 66 and cysteine 143. The active-site Nucleophile is the serine 154. A disulfide bridge links cysteine 202 with cysteine 209. Aspartate 206 is an active-site residue. The active-site Proton donor/acceptor is histidine 218.

Belongs to the cutinase family. The 2 disulfide bonds play a critical role in holding the catalytic residues in juxta-position; reduction of the disulfide bridges results in the complete inactivation of the enzyme.

Its subcellular location is the secreted. It carries out the reaction cutin + H2O = cutin monomers.. Its function is as follows. Catalyzes the hydrolysis of complex carboxylic polyesters found in the cell wall of plants. Degrades cutin, a macromolecule that forms the structure of the plant cuticle. Allows pathogenic fungi to penetrate through the cuticular barrier into the host plant during the initial stage of fungal infection. The chain is Cutinase (CUT1) from Blumeria hordei (Barley powdery mildew).